Reading from the N-terminus, the 472-residue chain is 3-isopropylmalate dehydratase large subunit (472 aa).

Residues C347, C407, and C410 each coordinate [4Fe-4S] cluster.

The protein belongs to the aconitase/IPM isomerase family. LeuC type 1 subfamily. As to quaternary structure, heterodimer of LeuC and LeuD. [4Fe-4S] cluster serves as cofactor.

It catalyses the reaction (2R,3S)-3-isopropylmalate = (2S)-2-isopropylmalate. It participates in amino-acid biosynthesis; L-leucine biosynthesis; L-leucine from 3-methyl-2-oxobutanoate: step 2/4. Functionally, catalyzes the isomerization between 2-isopropylmalate and 3-isopropylmalate, via the formation of 2-isopropylmaleate. The sequence is that of 3-isopropylmalate dehydratase large subunit from Synechococcus sp. (strain CC9902).